A 277-amino-acid polypeptide reads, in one-letter code: Large ribosomal subunit protein uL2 (277 aa).

The disordered stretch occupies residues 225–277 (AMNPVDHPHGGGEGKTSGGRHPVSPWGRPEGKTRRANKPSDRFIIRRKSRKRR). Over residues 253–268 (PEGKTRRANKPSDRFI) the composition is skewed to basic and acidic residues.

Belongs to the universal ribosomal protein uL2 family. As to quaternary structure, part of the 50S ribosomal subunit. Forms a bridge to the 30S subunit in the 70S ribosome.

Functionally, one of the primary rRNA binding proteins. Required for association of the 30S and 50S subunits to form the 70S ribosome, for tRNA binding and peptide bond formation. It has been suggested to have peptidyltransferase activity; this is somewhat controversial. Makes several contacts with the 16S rRNA in the 70S ribosome. The chain is Large ribosomal subunit protein uL2 from Tropheryma whipplei (strain TW08/27) (Whipple's bacillus).